A 461-amino-acid chain; its full sequence is Phosphoglucosamine mutase (461 aa).

Catalysis depends on Ser-107, which acts as the Phosphoserine intermediate. Mg(2+) is bound by residues Ser-107, Asp-254, Asp-256, and Asp-258. Ser-107 carries the post-translational modification Phosphoserine.

The protein belongs to the phosphohexose mutase family. Mg(2+) is required as a cofactor. In terms of processing, activated by phosphorylation.

It carries out the reaction alpha-D-glucosamine 1-phosphate = D-glucosamine 6-phosphate. Catalyzes the conversion of glucosamine-6-phosphate to glucosamine-1-phosphate. In Bifidobacterium longum (strain DJO10A), this protein is Phosphoglucosamine mutase.